The sequence spans 467 residues: Ribulose bisphosphate carboxylase large chain (467 aa).

Lys-5 bears the N6,N6,N6-trimethyllysine mark. Positions 114 and 164 each coordinate substrate. The active-site Proton acceptor is the Lys-166. A substrate-binding site is contributed by Lys-168. Residues Lys-192, Asp-194, and Glu-195 each contribute to the Mg(2+) site. An N6-carboxylysine modification is found at Lys-192. The active-site Proton acceptor is the His-285. Substrate is bound by residues Arg-286, His-318, and Ser-370.

Belongs to the RuBisCO large chain family. Type I subfamily. As to quaternary structure, heterohexadecamer of 8 large chains and 8 small chains; disulfide-linked. The disulfide link is formed within the large subunit homodimers. The cofactor is Mg(2+). In terms of processing, the disulfide bond which can form in the large chain dimeric partners within the hexadecamer appears to be associated with oxidative stress and protein turnover.

Its subcellular location is the plastid. The protein localises to the chloroplast. It catalyses the reaction 2 (2R)-3-phosphoglycerate + 2 H(+) = D-ribulose 1,5-bisphosphate + CO2 + H2O. The enzyme catalyses D-ribulose 1,5-bisphosphate + O2 = 2-phosphoglycolate + (2R)-3-phosphoglycerate + 2 H(+). Functionally, ruBisCO catalyzes two reactions: the carboxylation of D-ribulose 1,5-bisphosphate, the primary event in carbon dioxide fixation, as well as the oxidative fragmentation of the pentose substrate in the photorespiration process. Both reactions occur simultaneously and in competition at the same active site. This is Ribulose bisphosphate carboxylase large chain from Scutellaria bolanderi (Sierra skullcap).